We begin with the raw amino-acid sequence, 440 residues long: Argininosuccinate lyase (440 aa).

Belongs to the lyase 1 family. Argininosuccinate lyase subfamily.

It localises to the cytoplasm. The catalysed reaction is 2-(N(omega)-L-arginino)succinate = fumarate + L-arginine. Its pathway is amino-acid biosynthesis; L-arginine biosynthesis; L-arginine from L-ornithine and carbamoyl phosphate: step 3/3. This is Argininosuccinate lyase from Clostridium botulinum (strain Loch Maree / Type A3).